The following is a 357-amino-acid chain: 3'-hydroxy-N-methyl-(S)-coclaurine 4'-O-methyltransferase 2 (357 aa).

An S-adenosyl-L-methionine-binding site is contributed by Asp226. His264 (proton acceptor) is an active-site residue.

The protein belongs to the class I-like SAM-binding methyltransferase superfamily. Cation-independent O-methyltransferase family. COMT subfamily. In terms of assembly, homodimer. In terms of tissue distribution, expressed in roots, stems, leaves and flowers.

The enzyme catalyses (S)-3'-hydroxy-N-methylcoclaurine + S-adenosyl-L-methionine = (S)-reticuline + S-adenosyl-L-homocysteine + H(+). It participates in alkaloid biosynthesis; (S)-reticuline biosynthesis; (S)-reticuline from (S)-norcoclaurine: step 4/4. Functionally, involved in the biosynthesis of benzylisoquinoline alkaloids. Catalyzes the transfer of the methyl group to the 4'-hydroxyl group of 3'-hydroxy-N-methylcoclaurine to form reticuline. Can also use laudanosoline and, with a lower activity, 6-O-methylnorlaudanosoline and norlaudanosoline as substrates. Also involved in the papaverine biosynthesis. This chain is 3'-hydroxy-N-methyl-(S)-coclaurine 4'-O-methyltransferase 2, found in Papaver somniferum (Opium poppy).